Consider the following 206-residue polypeptide: Shieldin complex subunit 1 (206 aa).

A disordered region spans residues 27–94 (SSYEASQRVS…GQLETNEEED (68 aa)). A compositionally biased stretch (low complexity) spans 32 to 55 (SQRVSQGSSNSLSSLESHPFLSSS). Polar residues predominate over residues 56–74 (TTDPDSNSLNTEQKGSWDS).

In terms of assembly, component of the shieldin complex, consisting of SHLD1, SHLD2, SHLD3 and MAD2L2/REV7. Within the complex, SHLD2 forms a scaffold which interacts with a SHLD3-MAD2L2 subcomplex via its N-terminus, and with SHLD1 via its C-terminus. Interacts with ASTE1.

The protein resides in the chromosome. In terms of biological role, component of the shieldin complex, which plays an important role in repair of DNA double-stranded breaks (DSBs). During G1 and S phase of the cell cycle, the complex functions downstream of TP53BP1 to promote non-homologous end joining (NHEJ) and suppress DNA end resection. Mediates various NHEJ-dependent processes including immunoglobulin class-switch recombination, and fusion of unprotected telomeres. The protein is Shieldin complex subunit 1 of Mus musculus (Mouse).